The chain runs to 137 residues: MRLEDLQEELKKDVFIDSTKLQYEAANNVMLYSKWLNKHSSIKKEMLRIEAQKKVALKARLDYYSGRGDGDEFSMDRYEKSEMKTVLSADKDVLKVDTSLQYWGILLDFCSGALDAIKSRGFAIKHIQDMRAFEAGK.

In terms of assembly, homohexamer. Interacts with gp32.

Plays a role in viral DNA synthesis by promoting enzymatic activities of UvsX recombinase, by promoting UvsX-ssDNA filament assembly, and by helping UvsX to displace bound gp32 from ssDNA. The sequence is that of Recombination protein uvsY (uvsY) from Escherichia coli (Bacteriophage T4).